Reading from the N-terminus, the 396-residue chain is Vitamin K-dependent protein Z (396 aa).

One can recognise a Gla domain in the interval 1–46 (AGSYLLEELFEGHLEKECWEEICVYEEAREVFEDDETTDEFWRTYM). 4-carboxyglutamate is present on residues glutamate 7, glutamate 8, glutamate 11, glutamate 15, glutamate 17, glutamate 20, glutamate 21, glutamate 26, glutamate 27, glutamate 30, glutamate 33, glutamate 36, and glutamate 40. A disulfide bond links cysteine 18 and cysteine 23. EGF-like domains lie at 47–83 (GGSP…PNCA) and 85–126 (AESE…RSCL). 7 cysteine pairs are disulfide-bonded: cysteine 51–cysteine 62, cysteine 56–cysteine 71, cysteine 73–cysteine 82, cysteine 89–cysteine 101, cysteine 97–cysteine 110, cysteine 112–cysteine 125, and cysteine 169–cysteine 185. Serine 53 carries an O-linked (Glc...) serine glycan. Asparagine 59 is a glycosylation site (N-linked (GlcNAc...) asparagine). Aspartate 64 is modified ((3R)-3-hydroxyaspartate). Residues 135–357 (TLGPECCQRP…YALWLRQVTQ (223 aa)) form the Peptidase S1 domain. N-linked (GlcNAc...) asparagine glycosylation is found at asparagine 191 and asparagine 289. A disulfide bridge links cysteine 284 with cysteine 298. A disordered region spans residues 356–396 (TQQPSRASPRGDRGQGRDGEPVPGDRGGRWAPTALPPGPLV). The segment covering 364-375 (PRGDRGQGRDGE) has biased composition (basic and acidic residues). The O-linked (GalNAc...) threonine glycan is linked to threonine 388.

It belongs to the peptidase S1 family. Post-translationally, the iron and 2-oxoglutarate dependent 3-hydroxylation of aspartate and asparagine is (R) stereospecific within EGF domains. As to expression, plasma.

The protein resides in the secreted. In terms of biological role, inhibits activity of the coagulation protease factor Xa in the presence of SERPINA10, calcium and phospholipids. Appears to assist hemostasis by binding thrombin and promoting its association with phospholipid vesicles. This chain is Vitamin K-dependent protein Z (PROZ), found in Bos taurus (Bovine).